Here is a 380-residue protein sequence, read N- to C-terminus: MAPNLRKSHPLLKLINNSLIDLPTPSNISAWWNFGSLLGICLLTQILTGLLLATHYTADTTLAFSSVAHTCRNVQYGWLIRNLHANGASFFFICIYLHIGRGFYYGSYLNKETWNTGVILLLALMATAFVGYVLPWGQMSFWGATVITNLFSAIPYIGQTLVEWAWGGFSVDNPTLTRFFALHFLLPFMIAGLALIHLTFLHESGSNNPLGILSNCDKIPFHPYFSLKDILGFIIMFLPLTTLALFSPNLLGDPENFTPANPLVTPPHIKPEWYFLFAYAILRSIPNKLGGVLALAASVLVLFLAPLLHKSKQRAMTFRPFSQFLFWTLAANLFILTWVGSQPVEHPFIIIGQLASLTYFTILLLLFPIAGALENKMLNY.

Helical transmembrane passes span 34–54 (FGSL…LLAT), 78–99 (WLIR…YLHI), 114–134 (WNTG…GYVL), and 179–199 (FFAL…IHLT). Residues His-84 and His-98 each coordinate heme b. His-183 and His-197 together coordinate heme b. His-202 contributes to the a ubiquinone binding site. 4 consecutive transmembrane segments (helical) span residues 227-247 (LKDI…ALFS), 289-309 (LGGV…PLLH), 321-341 (FSQF…WVGS), and 348-368 (FIII…LLFP).

Belongs to the cytochrome b family. The cytochrome bc1 complex contains 11 subunits: 3 respiratory subunits (MT-CYB, CYC1 and UQCRFS1), 2 core proteins (UQCRC1 and UQCRC2) and 6 low-molecular weight proteins (UQCRH/QCR6, UQCRB/QCR7, UQCRQ/QCR8, UQCR10/QCR9, UQCR11/QCR10 and a cleavage product of UQCRFS1). This cytochrome bc1 complex then forms a dimer. It depends on heme b as a cofactor.

It localises to the mitochondrion inner membrane. Its function is as follows. Component of the ubiquinol-cytochrome c reductase complex (complex III or cytochrome b-c1 complex) that is part of the mitochondrial respiratory chain. The b-c1 complex mediates electron transfer from ubiquinol to cytochrome c. Contributes to the generation of a proton gradient across the mitochondrial membrane that is then used for ATP synthesis. The polypeptide is Cytochrome b (MT-CYB) (Alca torda (Razorbill)).